The sequence spans 449 residues: C4-dicarboxylate transport protein (449 aa).

A run of 8 helical transmembrane segments spans residues 20–42 (YLQL…HCYP), 62–84 (IISP…VGTV), 91–113 (AMVY…AHVV), 164–181 (ILQV…LALA), 202–224 (LVQM…TIGK), 239–261 (SFYL…FSGF), 344–366 (LALF…AGFI), and 370–389 (ATLT…ILGV).

The protein belongs to the dicarboxylate/amino acid:cation symporter (DAACS) (TC 2.A.23) family.

It is found in the cell inner membrane. Responsible for the transport of dicarboxylates such as succinate, fumarate, and malate from the periplasm across the inner membrane. This is C4-dicarboxylate transport protein (dctA) from Xylella fastidiosa (strain 9a5c).